Consider the following 65-residue polypeptide: DNA gyrase inhibitor YacG (65 aa).

Cys-9, Cys-12, Cys-28, and Cys-32 together coordinate Zn(2+). The tract at residues 44–65 (EKRIPSSSDLSESDDWSEEPKQ) is disordered. Positions 54–65 (SESDDWSEEPKQ) are enriched in acidic residues.

It belongs to the DNA gyrase inhibitor YacG family. As to quaternary structure, interacts with GyrB. Zn(2+) is required as a cofactor.

Its function is as follows. Inhibits all the catalytic activities of DNA gyrase by preventing its interaction with DNA. Acts by binding directly to the C-terminal domain of GyrB, which probably disrupts DNA binding by the gyrase. In Escherichia coli O6:H1 (strain CFT073 / ATCC 700928 / UPEC), this protein is DNA gyrase inhibitor YacG.